The primary structure comprises 581 residues: DEAD-box ATP-dependent RNA helicase 22 (581 aa).

Positions 80–108 match the Q motif motif; it reads VSWKSLGLSDNVSIALRDSGFDRPSLTQA. The Helicase ATP-binding domain occupies 111–380; the sequence is IPSILSGKDV…GGILKHMFQD (270 aa). 124-131 provides a ligand contact to ATP; sequence AETGSGKT. The short motif at 244–247 is the DEAD box element; sequence DEAD. Residues 408 to 566 form the Helicase C-terminal domain; that stretch reads QVDALIEAVK…GFRNKVKKRA (159 aa).

It belongs to the DEAD box helicase family.

It catalyses the reaction ATP + H2O = ADP + phosphate + H(+). The polypeptide is DEAD-box ATP-dependent RNA helicase 22 (RH22) (Arabidopsis thaliana (Mouse-ear cress)).